A 506-amino-acid chain; its full sequence is Galactose/methyl galactoside import ATP-binding protein MglA (506 aa).

ABC transporter domains lie at 14–249 and 264–506; these read LEMS…VGRS and VILE…SLHL. 46–53 is an ATP binding site; that stretch reads GENGAGKS.

Belongs to the ABC transporter superfamily. Galactose/methyl galactoside importer (TC 3.A.1.2.3) family. As to quaternary structure, the complex is composed of one ATP-binding protein (MglA), two transmembrane proteins (MglC) and a solute-binding protein (MglB).

It localises to the cell inner membrane. It catalyses the reaction D-galactose(out) + ATP + H2O = D-galactose(in) + ADP + phosphate + H(+). It carries out the reaction methyl beta-D-galactoside(out) + ATP + H2O = methyl beta-D-galactoside(in) + ADP + phosphate + H(+). Its function is as follows. Part of the ABC transporter complex MglABC involved in galactose/methyl galactoside import. Responsible for energy coupling to the transport system. The polypeptide is Galactose/methyl galactoside import ATP-binding protein MglA (Shigella boydii serotype 4 (strain Sb227)).